The following is a 59-amino-acid chain: Ribosome biogenesis protein Nop10 (59 aa).

It belongs to the NOP10 family.

Functionally, involved in ribosome biogenesis; more specifically in 18S rRNA pseudouridylation and in cleavage of pre-rRNA. This is Ribosome biogenesis protein Nop10 from Thermococcus kodakarensis (strain ATCC BAA-918 / JCM 12380 / KOD1) (Pyrococcus kodakaraensis (strain KOD1)).